Consider the following 509-residue polypeptide: ATP synthase subunit alpha (509 aa).

169-176 is a binding site for ATP; the sequence is GDRQTGKT.

The protein belongs to the ATPase alpha/beta chains family. As to quaternary structure, F-type ATPases have 2 components, CF(1) - the catalytic core - and CF(0) - the membrane proton channel. CF(1) has five subunits: alpha(3), beta(3), gamma(1), delta(1), epsilon(1). CF(0) has three main subunits: a(1), b(2) and c(9-12). The alpha and beta chains form an alternating ring which encloses part of the gamma chain. CF(1) is attached to CF(0) by a central stalk formed by the gamma and epsilon chains, while a peripheral stalk is formed by the delta and b chains.

It is found in the cell inner membrane. It carries out the reaction ATP + H2O + 4 H(+)(in) = ADP + phosphate + 5 H(+)(out). Functionally, produces ATP from ADP in the presence of a proton gradient across the membrane. The alpha chain is a regulatory subunit. In Paramagnetospirillum magneticum (strain ATCC 700264 / AMB-1) (Magnetospirillum magneticum), this protein is ATP synthase subunit alpha.